The following is a 490-amino-acid chain: Serine hydroxymethyltransferase, mitochondrial (490 aa).

A mitochondrion-targeting transit peptide spans 1–20 (MFPRASALAKCMATVHRRGL). Residue Lys-265 is modified to N6-(pyridoxal phosphate)lysine.

The protein belongs to the SHMT family. Homotetramer. Interacts with NAP1. It depends on pyridoxal 5'-phosphate as a cofactor.

The protein resides in the mitochondrion. It carries out the reaction (6R)-5,10-methylene-5,6,7,8-tetrahydrofolate + glycine + H2O = (6S)-5,6,7,8-tetrahydrofolate + L-serine. The protein operates within one-carbon metabolism; tetrahydrofolate interconversion. Functionally, interconversion of serine and glycine. This Saccharomyces cerevisiae (strain ATCC 204508 / S288c) (Baker's yeast) protein is Serine hydroxymethyltransferase, mitochondrial (SHM1).